The following is a 222-amino-acid chain: Dual specificity phosphatase 29 (222 aa).

In terms of domain architecture, Tyrosine-protein phosphatase spans 54–202; that stretch reads HVNEVWPKLY…LRELDKQLVQ (149 aa). 146–153 provides a ligand contact to substrate; the sequence is HCAMGRSR. Cys147 serves as the catalytic Phosphocysteine intermediate. The interval 201-222 is disordered; it reads VQQRRGAQHRGEAGEKAGEKEP. Residues 209–222 show a composition bias toward basic and acidic residues; it reads HRGEAGEKAGEKEP.

The protein belongs to the protein-tyrosine phosphatase family. Non-receptor class dual specificity subfamily. Homodimer. Interacts with PRKAA2.

The protein localises to the cytoplasm. It is found in the nucleus. The catalysed reaction is O-phospho-L-tyrosyl-[protein] + H2O = L-tyrosyl-[protein] + phosphate. The enzyme catalyses O-phospho-L-seryl-[protein] + H2O = L-seryl-[protein] + phosphate. It carries out the reaction O-phospho-L-threonyl-[protein] + H2O = L-threonyl-[protein] + phosphate. Its function is as follows. Dual specificity phosphatase able to dephosphorylate phosphotyrosine, phosphoserine and phosphothreonine residues within the same substrate, with a preference for phosphotyrosine as a substrate. Involved in the modulation of intracellular signaling cascades. In skeletal muscle regulates systemic glucose homeostasis by activating, AMPK, an energy sensor protein kinase. Affects MAP kinase signaling though modulation of the MAPK1/2 cascade in skeletal muscle promoting muscle cell differentiation, development and atrophy. In Sus scrofa (Pig), this protein is Dual specificity phosphatase 29 (DUSP29).